A 508-amino-acid polypeptide reads, in one-letter code: Bifunctional purine biosynthesis protein PurH (508 aa).

The MGS-like domain maps to 1 to 145 (MIKRALLSTY…KNYKDVIVVV (145 aa)).

Belongs to the PurH family.

The enzyme catalyses (6R)-10-formyltetrahydrofolate + 5-amino-1-(5-phospho-beta-D-ribosyl)imidazole-4-carboxamide = 5-formamido-1-(5-phospho-D-ribosyl)imidazole-4-carboxamide + (6S)-5,6,7,8-tetrahydrofolate. It carries out the reaction IMP + H2O = 5-formamido-1-(5-phospho-D-ribosyl)imidazole-4-carboxamide. It participates in purine metabolism; IMP biosynthesis via de novo pathway; 5-formamido-1-(5-phospho-D-ribosyl)imidazole-4-carboxamide from 5-amino-1-(5-phospho-D-ribosyl)imidazole-4-carboxamide (10-formyl THF route): step 1/1. The protein operates within purine metabolism; IMP biosynthesis via de novo pathway; IMP from 5-formamido-1-(5-phospho-D-ribosyl)imidazole-4-carboxamide: step 1/1. The chain is Bifunctional purine biosynthesis protein PurH from Petrotoga mobilis (strain DSM 10674 / SJ95).